Consider the following 116-residue polypeptide: U11-theraphotoxin-Hhn1c (116 aa).

The signal sequence occupies residues 1–21 (MNTVRVTFLLVFVLAVSLGQA). Residues 22-74 (DKDENRMEMQEKTEQGKSYLDFAENLLLQKLEELEAKLLEEDSEESRNSRQKR) constitute a propeptide that is removed on maturation. The segment at 61–83 (EEDSEESRNSRQKRCIGEGVPCD) is disordered. Intrachain disulfides connect Cys-75–Cys-90, Cys-82–Cys-95, and Cys-89–Cys-110.

This sequence belongs to the neurotoxin 14 (magi-1) family. 01 (HNTX-16) subfamily. As to expression, expressed by the venom gland.

The protein localises to the secreted. Probable ion channel inhibitor. In Cyriopagopus hainanus (Chinese bird spider), this protein is U11-theraphotoxin-Hhn1c.